A 407-amino-acid chain; its full sequence is [Pyruvate dehydrogenase (acetyl-transferring)] kinase isozyme 2, mitochondrial (407 aa).

The 230-residue stretch at 135-364 folds into the Histidine kinase domain; it reads LEYKDTYGDD…DAVIYLKALS (230 aa). Phosphotyrosine is present on residues Y215 and Y216. Residues 251–258, D290, 309–310, and 325–330 contribute to the ATP site; these read ELFKNAMR, ST, and GFGYGL. K376 carries the N6-succinyllysine modification.

It belongs to the PDK/BCKDK protein kinase family. In terms of assembly, homodimer, and heterodimer with PDK1. Interacts with the pyruvate dehydrogenase complex subunit DLAT, and is part of the multimeric pyruvate dehydrogenase complex that contains multiple copies of pyruvate dehydrogenase (E1), dihydrolipoamide acetyltransferase (DLAT, E2) and lipoamide dehydrogenase (DLD, E3). As to expression, expressed in many tissues, with the highest level in heart and skeletal muscle, intermediate levels in brain, kidney, pancreas and liver, and low levels in placenta and lung.

The protein resides in the mitochondrion matrix. It carries out the reaction L-seryl-[pyruvate dehydrogenase E1 alpha subunit] + ATP = O-phospho-L-seryl-[pyruvate dehydrogenase E1 alpha subunit] + ADP + H(+). Activity is enhanced by binding to the pyruvate dehydrogenase subunit DLAT. Inhibited by ADP and pyruvate; these compounds interfere with DLAT binding and thereby inhibit kinase activity. Inhibited by dichloroacetate. Inhibited by AZD7545; this compound interferes with DLAT binding and thereby inhibits kinase activity. Functionally, kinase that plays a key role in the regulation of glucose and fatty acid metabolism and homeostasis via phosphorylation of the pyruvate dehydrogenase subunits PDHA1 and PDHA2. This inhibits pyruvate dehydrogenase activity, and thereby regulates metabolite flux through the tricarboxylic acid cycle, down-regulates aerobic respiration and inhibits the formation of acetyl-coenzyme A from pyruvate. Inhibition of pyruvate dehydrogenase decreases glucose utilization and increases fat metabolism. Mediates cellular responses to insulin. Plays an important role in maintaining normal blood glucose levels and in metabolic adaptation to nutrient availability. Via its regulation of pyruvate dehydrogenase activity, plays an important role in maintaining normal blood pH and in preventing the accumulation of ketone bodies under starvation. Plays a role in the regulation of cell proliferation and in resistance to apoptosis under oxidative stress. Plays a role in p53/TP53-mediated apoptosis. The polypeptide is [Pyruvate dehydrogenase (acetyl-transferring)] kinase isozyme 2, mitochondrial (PDK2) (Homo sapiens (Human)).